Here is a 319-residue protein sequence, read N- to C-terminus: Lipooligosaccharide heptosyltransferase 2 (319 aa).

The protein belongs to the glycosyltransferase 9 family.

It carries out the reaction an L-alpha-D-Hep-(1-&gt;5)-[alpha-Kdo-(2-&gt;4)]-alpha-Kdo-(2-&gt;6)-lipid A + ADP-L-glycero-beta-D-manno-heptose = an L-alpha-D-Hep-(1-&gt;3)-L-alpha-D-Hep-(1-&gt;5)-[alpha-Kdo-(2-&gt;4)]-alpha-Kdo-(2-&gt;6)-lipid A + ADP + H(+). Its pathway is bacterial outer membrane biogenesis; LOS core biosynthesis. Its function is as follows. Glycosyltransferase involved in the biosynthesis of the core oligosaccharide region of lipooligosaccharide (LOS). Catalyzes the addition of the second heptose unit to the heptosyl-Kdo2-lipid A module. The sequence is that of Lipooligosaccharide heptosyltransferase 2 from Campylobacter jejuni subsp. jejuni serotype O:2 (strain ATCC 700819 / NCTC 11168).